The chain runs to 94 residues: MASETVTNHQEKALALLQADAEKILRLIKVQMDHLTMPQCPLYEEVLDTQMFGLSREVDFAVRLDLISEEQGKEMLGELERELSALHEAFTNKK.

Belongs to the UPF0358 family.

The polypeptide is UPF0358 protein Bcer98_2651 (Bacillus cytotoxicus (strain DSM 22905 / CIP 110041 / 391-98 / NVH 391-98)).